A 126-amino-acid polypeptide reads, in one-letter code: Profilin (126 aa).

The protein belongs to the profilin family. Occurs in many kinds of cells as a complex with monomeric actin in a 1:1 ratio.

Its subcellular location is the cytoplasm. The protein resides in the cytoskeleton. Functionally, binds to actin and affects the structure of the cytoskeleton. At high concentrations, profilin prevents the polymerization of actin, whereas it enhances it at low concentrations. By binding to PIP2, it inhibits the formation of IP3 and DG. This chain is Profilin (PFY1), found in Saccharomyces cerevisiae (strain ATCC 204508 / S288c) (Baker's yeast).